The sequence spans 387 residues: Killer cell lectin-like receptor subfamily G member 2 (387 aa).

Residues 1–105 (MEPPQVPAEA…SGEPAPASWA (105 aa)) form a disordered region. The span at 15–27 (ASEDSPRPERTGW) shows a compositional bias: basic and acidic residues. S143 is modified (phosphoserine). The disordered stretch occupies residues 155-174 (QWLPRAPSPGSTWSRGSPLA). The helical transmembrane segment at 241 to 261 (WALVVMAVLLAVCTVAVVALA) threads the bilayer. The C-type lectin domain maps to 278–383 (SQEQCYYLSE…CSSPRPWVCA (106 aa)). Cystine bridges form between C299/C382 and C361/C374.

The protein resides in the membrane. The sequence is that of Killer cell lectin-like receptor subfamily G member 2 (Klrg2) from Mus musculus (Mouse).